Consider the following 345-residue polypeptide: UDP-3-O-acylglucosamine N-acyltransferase (345 aa).

Histidine 239 functions as the Proton acceptor in the catalytic mechanism.

The protein belongs to the transferase hexapeptide repeat family. LpxD subfamily. In terms of assembly, homotrimer.

The catalysed reaction is a UDP-3-O-[(3R)-3-hydroxyacyl]-alpha-D-glucosamine + a (3R)-hydroxyacyl-[ACP] = a UDP-2-N,3-O-bis[(3R)-3-hydroxyacyl]-alpha-D-glucosamine + holo-[ACP] + H(+). It participates in bacterial outer membrane biogenesis; LPS lipid A biosynthesis. Catalyzes the N-acylation of UDP-3-O-acylglucosamine using 3-hydroxyacyl-ACP as the acyl donor. Is involved in the biosynthesis of lipid A, a phosphorylated glycolipid that anchors the lipopolysaccharide to the outer membrane of the cell. This Geobacter metallireducens (strain ATCC 53774 / DSM 7210 / GS-15) protein is UDP-3-O-acylglucosamine N-acyltransferase.